The sequence spans 72 residues: Large ribosomal subunit protein uL29 (72 aa).

Belongs to the universal ribosomal protein uL29 family. In terms of assembly, part of the 50S ribosomal subunit.

The chain is Large ribosomal subunit protein uL29 from Pyrococcus furiosus (strain ATCC 43587 / DSM 3638 / JCM 8422 / Vc1).